A 709-amino-acid polypeptide reads, in one-letter code: Elongation factor G (709 aa).

Residues asparagine 10–leucine 286 form the tr-type G domain. Residues alanine 19–threonine 26, aspartate 83–histidine 87, and asparagine 137–aspartate 140 contribute to the GTP site.

It belongs to the TRAFAC class translation factor GTPase superfamily. Classic translation factor GTPase family. EF-G/EF-2 subfamily.

It localises to the cytoplasm. In terms of biological role, catalyzes the GTP-dependent ribosomal translocation step during translation elongation. During this step, the ribosome changes from the pre-translocational (PRE) to the post-translocational (POST) state as the newly formed A-site-bound peptidyl-tRNA and P-site-bound deacylated tRNA move to the P and E sites, respectively. Catalyzes the coordinated movement of the two tRNA molecules, the mRNA and conformational changes in the ribosome. This is Elongation factor G from Corynebacterium glutamicum (strain R).